The primary structure comprises 135 residues: RxLR effector protein Avh5 (135 aa).

An N-terminal signal peptide occupies residues 1 to 19; that stretch reads MRLQFFLVMAVATLATISA. The RxLR-dEER signature appears at 43–71; it reads RFLRTADTDIVYEPKVHNPGKKQVFIEDK. A 1,2-diacyl-sn-glycero-3-phospho-(1D-myo-inositol-3-phosphate)-binding residues include K81, K83, and K84.

This sequence belongs to the RxLR effector family.

Its subcellular location is the secreted. The protein localises to the host cell. In terms of biological role, effector that suppresses plant defense responses during the early stages of pathogen infection. Suppresses cell death induced by effectors and PAMPs in plant hosts. The polypeptide is RxLR effector protein Avh5 (Phytophthora sojae (Soybean stem and root rot agent)).